The chain runs to 27 residues: Fructokinase (27 aa).

This sequence belongs to the ROK (NagC/XylR) family. In terms of assembly, homodimer. It depends on Mg(2+) as a cofactor.

The catalysed reaction is D-fructose + ATP = D-fructose 6-phosphate + ADP + H(+). Its activity is regulated as follows. Inhibition by zinc ions. This Fusobacterium mortiferum protein is Fructokinase.